Reading from the N-terminus, the 358-residue chain is Putative ankyrin repeat protein FPV242 (358 aa).

ANK repeat units lie at residues Asn6–Val35, Asn40–Tyr69, Thr91–Val118, Glu119–Tyr147, Gly149–Lys177, Cys180–Lys209, Glu214–Thr243, Asn248–Ile277, Glu280–Gly312, and Tyr316–Ser345.

This chain is Putative ankyrin repeat protein FPV242, found in Fowlpox virus (strain NVSL) (FPV).